The primary structure comprises 88 residues: Small ribosomal subunit protein bS20 (88 aa).

Positions 1 to 23 (MANSPQAKKRARQNDKARAHNAS) are disordered.

This sequence belongs to the bacterial ribosomal protein bS20 family.

Binds directly to 16S ribosomal RNA. The polypeptide is Small ribosomal subunit protein bS20 (Saccharophagus degradans (strain 2-40 / ATCC 43961 / DSM 17024)).